We begin with the raw amino-acid sequence, 66 residues long: Large ribosomal subunit protein bL35 (66 aa).

Belongs to the bacterial ribosomal protein bL35 family.

This Treponema denticola (strain ATCC 35405 / DSM 14222 / CIP 103919 / JCM 8153 / KCTC 15104) protein is Large ribosomal subunit protein bL35.